The primary structure comprises 371 residues: Neuropeptide S receptor (371 aa).

Over 1 to 52 the chain is Extracellular; sequence MPANLTEGSFHANQTVPMLDSSPVACTEIVTFTEALVAEEWGSFYSSFKTEQ. N-linked (GlcNAc...) asparagine glycosylation is found at asparagine 4 and asparagine 13. The helical transmembrane segment at 53–73 threads the bilayer; sequence LITLWVLFVVTIVGNSVVLFS. Topologically, residues 74–82 are cytoplasmic; the sequence is TCRRKRKSR. A helical transmembrane segment spans residues 83–103; it reads MTFFVTQLAITDSFTGLINIL. At 104–123 the chain is on the extracellular side; it reads TDIIWRFTGDFMAPDLVCRV. Residues cysteine 121 and cysteine 197 are joined by a disulfide bond. A helical membrane pass occupies residues 124-144; that stretch reads VRYLQVVLLYASTYVLVSLSI. Residues 145–164 lie on the Cytoplasmic side of the membrane; that stretch reads DRYHAIVYPMKFLQGEKQAK. A helical membrane pass occupies residues 165–185; that stretch reads VLIGIAWSLSFLFSIPTLIIF. The Extracellular segment spans residues 186 to 212; it reads GKRTLSNGEVQCWALWPDDSYWTPYMT. The chain crosses the membrane as a helical span at residues 213–233; sequence IVAFLVYFIPLAIISVIYGLV. Topologically, residues 234-275 are cytoplasmic; sequence IRTIWMKSKTHETVISNCSDGKLCCSYNRGLISKAKIKAIKY. A helical membrane pass occupies residues 276–296; sequence SIVIILAFICCWSPYFLFDIL. Topologically, residues 297-312 are extracellular; the sequence is DNFNVLPDTKERFYAS. Residues 313 to 333 traverse the membrane as a helical segment; that stretch reads VIIQNLPALNSAINPLIYCIF. The Cytoplasmic segment spans residues 334–371; sequence SSSICSPCKMQRSQDSRMTYRERSERHEMQILSKPEFI.

Belongs to the G-protein coupled receptor 1 family. Vasopressin/oxytocin receptor subfamily.

It is found in the cell membrane. Functionally, G-protein coupled receptor for neuropeptide S (NPS). Promotes mobilization of intracellular Ca(2+) stores. Inhibits cell growth in response to NPS binding. Involved in pathogenesis of asthma and other IgE-mediated diseases. This chain is Neuropeptide S receptor (Npsr1), found in Mus musculus (Mouse).